Consider the following 265-residue polypeptide: Mlc titration factor A (265 aa).

Zn(2+) contacts are provided by histidine 111, histidine 148, histidine 152, and glutamate 211.

Belongs to the MtfA family. In terms of assembly, interacts with Mlc. The cofactor is Zn(2+).

It is found in the cytoplasm. Involved in the modulation of the activity of the glucose-phosphotransferase system (glucose-PTS). Interacts with the transcriptional repressor Mlc, preventing its interaction with DNA and leading to the modulation of expression of genes regulated by Mlc, including ptsG, which encodes the PTS system glucose-specific EIICB component. Functionally, shows zinc-dependent metallopeptidase activity. The polypeptide is Mlc titration factor A (Shigella dysenteriae serotype 1 (strain Sd197)).